A 264-amino-acid chain; its full sequence is Thymidylate synthase (264 aa).

Arginine 21 serves as a coordination point for dUMP. A (6R)-5,10-methylene-5,6,7,8-tetrahydrofolate-binding site is contributed by histidine 51. Arginine 126–arginine 127 contacts dUMP. Cysteine 146 functions as the Nucleophile in the catalytic mechanism. DUMP contacts are provided by residues arginine 166–aspartate 169, asparagine 177, and histidine 207–tyrosine 209. Aspartate 169 provides a ligand contact to (6R)-5,10-methylene-5,6,7,8-tetrahydrofolate. (6R)-5,10-methylene-5,6,7,8-tetrahydrofolate is bound at residue alanine 263.

This sequence belongs to the thymidylate synthase family. Bacterial-type ThyA subfamily. As to quaternary structure, homodimer.

It is found in the cytoplasm. The enzyme catalyses dUMP + (6R)-5,10-methylene-5,6,7,8-tetrahydrofolate = 7,8-dihydrofolate + dTMP. It functions in the pathway pyrimidine metabolism; dTTP biosynthesis. Functionally, catalyzes the reductive methylation of 2'-deoxyuridine-5'-monophosphate (dUMP) to 2'-deoxythymidine-5'-monophosphate (dTMP) while utilizing 5,10-methylenetetrahydrofolate (mTHF) as the methyl donor and reductant in the reaction, yielding dihydrofolate (DHF) as a by-product. This enzymatic reaction provides an intracellular de novo source of dTMP, an essential precursor for DNA biosynthesis. This Paramagnetospirillum magneticum (strain ATCC 700264 / AMB-1) (Magnetospirillum magneticum) protein is Thymidylate synthase.